The chain runs to 75 residues: UPF0352 protein ETA_12580 (75 aa).

This sequence belongs to the UPF0352 family.

The sequence is that of UPF0352 protein ETA_12580 from Erwinia tasmaniensis (strain DSM 17950 / CFBP 7177 / CIP 109463 / NCPPB 4357 / Et1/99).